Here is a 394-residue protein sequence, read N- to C-terminus: S-adenosylmethionine synthase 2 (394 aa).

Glu-11 contacts Mg(2+). Residue His-17 participates in ATP binding. Glu-45 lines the K(+) pocket. 2 residues coordinate L-methionine: Glu-58 and Gln-101. ATP is bound by residues 169–171, 237–240, Asp-248, 254–255, Ala-271, Lys-275, and Lys-279; these read DGK, SGRF, and RK. Asp-248 contributes to the L-methionine binding site. Lys-279 lines the L-methionine pocket.

The protein belongs to the AdoMet synthase family. Homotetramer. The cofactor is Mn(2+). Requires Mg(2+) as cofactor. It depends on Co(2+) as a cofactor. K(+) serves as cofactor.

It localises to the cytoplasm. The catalysed reaction is L-methionine + ATP + H2O = S-adenosyl-L-methionine + phosphate + diphosphate. It participates in amino-acid biosynthesis; S-adenosyl-L-methionine biosynthesis; S-adenosyl-L-methionine from L-methionine: step 1/1. Catalyzes the formation of S-adenosylmethionine from methionine and ATP. The reaction comprises two steps that are both catalyzed by the same enzyme: formation of S-adenosylmethionine (AdoMet) and triphosphate, and subsequent hydrolysis of the triphosphate. The chain is S-adenosylmethionine synthase 2 (SAM2) from Hordeum vulgare (Barley).